The sequence spans 487 residues: L-tartrate/succinate antiporter (487 aa).

A run of 14 helical transmembrane segments spans residues 10–30 (YLAP…AGLE), 33–53 (TWLY…EPVP), 54–74 (GAVV…WLLF), 93–113 (WAVS…FMFG), 137–157 (TLFL…VTPS), 189–209 (IGSY…AIFL), 236–256 (FLGM…LAYV), 292–312 (LMVG…AAMV), 313–333 (GYSV…DIVS), 340–360 (VFFW…TGFI), 370–390 (SLSG…FYLL), 393–413 (FFAS…AAAL), 418–438 (IPLP…SILT), and 465–485 (IFGL…MPVV).

The protein belongs to the SLC13A/DASS transporter (TC 2.A.47) family. DIT1 subfamily.

Its subcellular location is the cell inner membrane. It catalyses the reaction (2R,3R)-tartrate(out) + succinate(in) = (2R,3R)-tartrate(in) + succinate(out). Its function is as follows. Catalyzes the uptake of tartrate in exchange for intracellular succinate. Essential for anaerobic L-tartrate fermentation. The protein is L-tartrate/succinate antiporter (ttdT) of Escherichia coli O157:H7.